The following is a 335-amino-acid chain: Glyoxylate reductase (335 aa).

NADP(+)-binding positions include 159–162, 181–183, and 240–242; these read MGRI, SRS, and TGR. Active-site residues include arginine 242 and glutamate 271. The active-site Proton donor is histidine 290. Residue 290–292 coordinates NADP(+); that stretch reads HAA.

It belongs to the D-isomer specific 2-hydroxyacid dehydrogenase family. GyaR subfamily. Homodimer.

The protein localises to the cytoplasm. It catalyses the reaction glycolate + NAD(+) = glyoxylate + NADH + H(+). The sequence is that of Glyoxylate reductase from Aeropyrum pernix (strain ATCC 700893 / DSM 11879 / JCM 9820 / NBRC 100138 / K1).